The sequence spans 68 residues: Antimicrobial peptide UyCT3 (68 aa).

An N-terminal signal peptide occupies residues 1-23; it reads MKNQFVLLLLAIVFLQMIFQSDA. At Phe-36 the chain carries Phenylalanine amide. The propeptide occupies 40–68; that stretch reads GLENMDKFDELFDGDLSEADLDFLKELMR.

It belongs to the non-disulfide-bridged peptide (NDBP) superfamily. Short antimicrobial peptide (group 4) family. In terms of processing, the non-amidated UyCT3 does not show antimicrobial activity. As to expression, expressed by the venom gland.

The protein resides in the secreted. Its subcellular location is the target cell membrane. Its function is as follows. Antimicrobial peptide that inhibits the growth of Gram-positive (S.aureus, MIC=10 uM) and Gram-negative bacteria (E.coli, MIC=15 uM and P.aeruginosa, MIC=6 uM). It also shows 35% of hemolysis when 15 uM are tested (95% at 50 uM). The sequence is that of Antimicrobial peptide UyCT3 from Urodacus yaschenkoi (Inland robust scorpion).